Consider the following 383-residue polypeptide: Adaptive-response sensory kinase SasA (383 aa).

Residues 152–365 (MVAHELRTPL…CFTFTVPIWQ (214 aa)) form the Histidine kinase domain. A Phosphohistidine; by autocatalysis modification is found at H155.

Homooligomerizes. Interacts with KaiC. Participates in the KaiABC clock complex, whose core is composed of a KaiC homohexamer, 6 KaiB and up to 6 KaiA dimers. SasA and KaiB(fs) compete to bind to KaiC.

It carries out the reaction ATP + protein L-histidine = ADP + protein N-phospho-L-histidine.. Functionally, member of the two-component regulatory system SasA/RpaA involved in genome-wide circadian gene expression. One of several clock output pathways. Participates in the Kai clock protein complex, the main circadian regulator in cyanobacteria, via its interaction with KaiC. KaiC enhances the autophosphorylation activity of SasA, which then transfers its phosphate group to RpaA to activate it. In addition to its output function, recruits fold-shifted KaiB (KaiB(fs)) to KaiC to cooperatively form the KaiB(6):KaiC(6) complex (independent of SasA kinase activity). Required for robustness of the circadian rhythm of gene expression and is involved in clock output, also required for adaptation to light/dark cycles. The chain is Adaptive-response sensory kinase SasA from Parasynechococcus marenigrum (strain WH8102).